The following is a 629-amino-acid chain: tRNA uridine 5-carboxymethylaminomethyl modification enzyme MnmG (629 aa).

13 to 18 (GGGHAG) lines the FAD pocket. Position 273-287 (273-287 (GPRYCPSIEDKIHRF)) interacts with NAD(+).

The protein belongs to the MnmG family. As to quaternary structure, homodimer. Heterotetramer of two MnmE and two MnmG subunits. FAD serves as cofactor.

It localises to the cytoplasm. Functionally, NAD-binding protein involved in the addition of a carboxymethylaminomethyl (cmnm) group at the wobble position (U34) of certain tRNAs, forming tRNA-cmnm(5)s(2)U34. The polypeptide is tRNA uridine 5-carboxymethylaminomethyl modification enzyme MnmG (Shewanella baltica (strain OS195)).